We begin with the raw amino-acid sequence, 31 residues long: Spectrin beta chain, non-erythrocytic 1 (31 aa).

Spectrin repeat units lie at residues 1–10, 11–19, and 20–31; these read VLLLSQDYGK, YKEVAELTR, and TQILAASYELHK. Residue Tyr-27 is modified to Phosphotyrosine.

This sequence belongs to the spectrin family. In terms of assembly, interacts with ANK2. Interacts with CPNE4 (via VWFA domain). Like erythrocyte spectrin, the spectrin-like proteins are capable to form dimers which can further associate to tetramers. Associates with the gamma-tubulin complex in brain, but not in kidney, liver, sperm, or uterus. Interacts with CAMSAP1. Can form heterodimers with SPTAN1.

The protein localises to the cytoplasm. Its subcellular location is the cytoskeleton. The protein resides in the myofibril. It is found in the sarcomere. It localises to the m line. The protein localises to the cytosol. Its subcellular location is the cell membrane. Functionally, fodrin, which seems to be involved in secretion, interacts with calmodulin in a calcium-dependent manner and is thus candidate for the calcium-dependent movement of the cytoskeleton at the membrane. Plays a critical role in central nervous system development and function. The sequence is that of Spectrin beta chain, non-erythrocytic 1 (SPTBN1) from Capra hircus (Goat).